Reading from the N-terminus, the 245-residue chain is 1-(5-phosphoribosyl)-5-[(5-phosphoribosylamino)methylideneamino] imidazole-4-carboxamide isomerase (245 aa).

D10 serves as the catalytic Proton acceptor. D135 (proton donor) is an active-site residue.

Belongs to the HisA/HisF family.

The protein resides in the cytoplasm. The catalysed reaction is 1-(5-phospho-beta-D-ribosyl)-5-[(5-phospho-beta-D-ribosylamino)methylideneamino]imidazole-4-carboxamide = 5-[(5-phospho-1-deoxy-D-ribulos-1-ylimino)methylamino]-1-(5-phospho-beta-D-ribosyl)imidazole-4-carboxamide. Its pathway is amino-acid biosynthesis; L-histidine biosynthesis; L-histidine from 5-phospho-alpha-D-ribose 1-diphosphate: step 4/9. This is 1-(5-phosphoribosyl)-5-[(5-phosphoribosylamino)methylideneamino] imidazole-4-carboxamide isomerase from Methanosarcina acetivorans (strain ATCC 35395 / DSM 2834 / JCM 12185 / C2A).